A 63-amino-acid chain; its full sequence is Toxin S6C6 (63 aa).

Intrachain disulfides connect cysteine 3–cysteine 24, cysteine 6–cysteine 11, cysteine 17–cysteine 39, cysteine 43–cysteine 55, and cysteine 56–cysteine 61.

The protein belongs to the three-finger toxin family. Ancestral subfamily. Orphan group XIX sub-subfamily. In terms of tissue distribution, expressed by the venom gland.

It is found in the secreted. Functionally, may enhance presynaptic acetylcholine release. This Dendroaspis jamesoni kaimosae (Eastern Jameson's mamba) protein is Toxin S6C6.